The sequence spans 178 residues: Fatty-acid and retinol-binding protein 1 (178 aa).

Positions 1-16 (MYHQLILMALIGVIMA) are cleaved as a signal peptide. 2 N-linked (GlcNAc...) asparagine glycosylation sites follow: Asn44 and Asn75. Coiled coils occupy residues 67 to 89 (DAAL…ELRN) and 122 to 154 (QKLD…LKAT). Asn157 is a glycosylation site (N-linked (GlcNAc...) asparagine).

This sequence belongs to the fatty-acid and retinol-binding protein (FARBP) family. In terms of processing, N-glycosylated.

Its subcellular location is the secreted. In terms of biological role, binds retinol and different fatty acids. The protein is Fatty-acid and retinol-binding protein 1 of Onchocerca ochengi (Filarial nematode worm).